The sequence spans 198 residues: Ribonuclease HII (198 aa).

One can recognise an RNase H type-2 domain in the interval 10–198 (QLVAGVDEVG…PVKRALGLAS (189 aa)). Positions 16, 17, and 108 each coordinate a divalent metal cation.

It belongs to the RNase HII family. It depends on Mn(2+) as a cofactor. The cofactor is Mg(2+).

The protein resides in the cytoplasm. It carries out the reaction Endonucleolytic cleavage to 5'-phosphomonoester.. Functionally, endonuclease that specifically degrades the RNA of RNA-DNA hybrids. This is Ribonuclease HII from Escherichia coli O81 (strain ED1a).